A 247-amino-acid polypeptide reads, in one-letter code: Ribonuclease PH (247 aa).

Phosphate contacts are provided by residues Arg87 and 125-127 (GTR).

Belongs to the RNase PH family. In terms of assembly, homohexameric ring arranged as a trimer of dimers.

It carries out the reaction tRNA(n+1) + phosphate = tRNA(n) + a ribonucleoside 5'-diphosphate. Its function is as follows. Phosphorolytic 3'-5' exoribonuclease that plays an important role in tRNA 3'-end maturation. Removes nucleotide residues following the 3'-CCA terminus of tRNAs; can also add nucleotides to the ends of RNA molecules by using nucleoside diphosphates as substrates, but this may not be physiologically important. Probably plays a role in initiation of 16S rRNA degradation (leading to ribosome degradation) during starvation. The chain is Ribonuclease PH from Nostoc sp. (strain PCC 7120 / SAG 25.82 / UTEX 2576).